We begin with the raw amino-acid sequence, 254 residues long: Alcohol dehydrogenase 2 (254 aa).

NAD(+) is bound at residue 10–33 (FVAGLGGIGLDTSREIVKSGPKNL). Residue S138 coordinates substrate. The active-site Proton acceptor is Y151.

This sequence belongs to the short-chain dehydrogenases/reductases (SDR) family. Homodimer.

It catalyses the reaction a primary alcohol + NAD(+) = an aldehyde + NADH + H(+). The enzyme catalyses a secondary alcohol + NAD(+) = a ketone + NADH + H(+). In Drosophila montana (Fruit fly), this protein is Alcohol dehydrogenase 2 (Adh2).